Reading from the N-terminus, the 315-residue chain is Putative purine nucleoside phosphorylase (315 aa).

Phosphate is bound by residues S49, H81, 103–105 (RYH), and A135. A purine D-ribonucleoside is bound at residue E220. S239 provides a ligand contact to phosphate. A purine D-ribonucleoside is bound at residue N262.

The protein belongs to the PNP/MTAP phosphorylase family.

The protein localises to the cytoplasm. Its subcellular location is the nucleus. It carries out the reaction a purine D-ribonucleoside + phosphate = a purine nucleobase + alpha-D-ribose 1-phosphate. Its pathway is purine metabolism; purine nucleoside salvage. In terms of biological role, the purine nucleoside phosphorylases catalyze the phosphorolytic breakdown of the N-glycosidic bond in the beta-(deoxy)ribonucleoside molecules, with the formation of the corresponding free purine bases and pentose-1-phosphate. Cleaves guanosine and inosine. This Schizosaccharomyces pombe (strain 972 / ATCC 24843) (Fission yeast) protein is Putative purine nucleoside phosphorylase.